The sequence spans 421 residues: Gamma-glutamyl phosphate reductase (421 aa).

It belongs to the gamma-glutamyl phosphate reductase family.

Its subcellular location is the cytoplasm. It catalyses the reaction L-glutamate 5-semialdehyde + phosphate + NADP(+) = L-glutamyl 5-phosphate + NADPH + H(+). The protein operates within amino-acid biosynthesis; L-proline biosynthesis; L-glutamate 5-semialdehyde from L-glutamate: step 2/2. Catalyzes the NADPH-dependent reduction of L-glutamate 5-phosphate into L-glutamate 5-semialdehyde and phosphate. The product spontaneously undergoes cyclization to form 1-pyrroline-5-carboxylate. This Pseudomonas savastanoi pv. phaseolicola (strain 1448A / Race 6) (Pseudomonas syringae pv. phaseolicola (strain 1448A / Race 6)) protein is Gamma-glutamyl phosphate reductase.